The primary structure comprises 693 residues: Elongation factor G 1 (693 aa).

In terms of domain architecture, tr-type G spans 4 to 281 (NKLRNIGISA…AVTRFLPSPH (278 aa)). GTP contacts are provided by residues 13-20 (AHIDSGKT), 80-84 (DTPGH), and 134-137 (NKCD).

The protein belongs to the TRAFAC class translation factor GTPase superfamily. Classic translation factor GTPase family. EF-G/EF-2 subfamily.

It is found in the cytoplasm. Catalyzes the GTP-dependent ribosomal translocation step during translation elongation. During this step, the ribosome changes from the pre-translocational (PRE) to the post-translocational (POST) state as the newly formed A-site-bound peptidyl-tRNA and P-site-bound deacylated tRNA move to the P and E sites, respectively. Catalyzes the coordinated movement of the two tRNA molecules, the mRNA and conformational changes in the ribosome. This chain is Elongation factor G 1 (fusA), found in Borreliella burgdorferi (strain ATCC 35210 / DSM 4680 / CIP 102532 / B31) (Borrelia burgdorferi).